We begin with the raw amino-acid sequence, 185 residues long: Adenine phosphoribosyltransferase (185 aa).

Belongs to the purine/pyrimidine phosphoribosyltransferase family. In terms of assembly, homodimer.

The protein resides in the cytoplasm. The catalysed reaction is AMP + diphosphate = 5-phospho-alpha-D-ribose 1-diphosphate + adenine. It participates in purine metabolism; AMP biosynthesis via salvage pathway; AMP from adenine: step 1/1. Catalyzes a salvage reaction resulting in the formation of AMP, that is energically less costly than de novo synthesis. The sequence is that of Adenine phosphoribosyltransferase from Kineococcus radiotolerans (strain ATCC BAA-149 / DSM 14245 / SRS30216).